We begin with the raw amino-acid sequence, 320 residues long: MKILVTGGAGFIGSHFVTSLISGDIATPQPVTQVTVVDKLGYGGNLRNLAEASADPRFSFVRGDICDEGLIEGLMARHDTVAHFAAETHVDRSVVASGPFVASNLVGTQVLLDAALRHHIGRFLHVSTDEVYGSIDTGSWAEGHPLAPNSPYAASKAGSDLLALAYHQTHGMDVVVTRCSNNYGPRQFPEKMIPLFVTRLLDGLDVPVYGDGRNIRDWLHVSDHCRGLALALGAGRAGEVYHIGGGWEATNLELTEILLEACGAPASRISFVTDRKGHDRRYSLDYSKIAGELGYRPRVDFTDGIAETVAWYRANRSWWT.

NAD(+)-binding positions include 11 to 12, 38 to 41, 64 to 65, 84 to 88, and S103; these read FI, DKLG, DI, and FAAET. Residue T88 participates in substrate binding. Residue T128 participates in substrate binding. D129 (proton donor) is an active-site residue. Active-site proton acceptor residues include E130 and Y152. Position 152–156 (152–156) interacts with NAD(+); that stretch reads YAASK. N181 is a substrate binding site. Residue N182 participates in NAD(+) binding. Substrate is bound by residues 191 to 192, 207 to 209, R216, N251, and 274 to 278; these read KM, PVY, and DRKGH.

The protein belongs to the NAD(P)-dependent epimerase/dehydratase family. dTDP-glucose dehydratase subfamily. Homodimer. NAD(+) serves as cofactor.

It catalyses the reaction dTDP-alpha-D-glucose = dTDP-4-dehydro-6-deoxy-alpha-D-glucose + H2O. Its function is as follows. Probably involved in the biosynthesis of the acarviose moiety of the alpha-glucosidase inhibitor acarbose. Catalyzes the dehydration of dTDP-D-glucose to form dTDP-6-deoxy-D-xylo-4-hexulose via a three-step process involving oxidation, dehydration and reduction. The chain is dTDP-glucose 4,6-dehydratase from Actinoplanes sp. (strain ATCC 31044 / CBS 674.73 / SE50/110).